The primary structure comprises 258 residues: Protein U52 (258 aa).

The protein belongs to the herpesviridae UL79 family.

This Human herpesvirus 6A (strain Uganda-1102) (HHV-6 variant A) protein is Protein U52 (U52).